The primary structure comprises 430 residues: Phosphomethylpyrimidine synthase (430 aa).

Residues N68, M96, Y125, H164, 186–188, 227–230, and E266 each bind substrate; these read SRG and DALR. H270 serves as a coordination point for Zn(2+). Y293 is a substrate binding site. A Zn(2+)-binding site is contributed by H334. C410, C413, and C417 together coordinate [4Fe-4S] cluster.

This sequence belongs to the ThiC family. [4Fe-4S] cluster serves as cofactor.

It catalyses the reaction 5-amino-1-(5-phospho-beta-D-ribosyl)imidazole + S-adenosyl-L-methionine = 4-amino-2-methyl-5-(phosphooxymethyl)pyrimidine + CO + 5'-deoxyadenosine + formate + L-methionine + 3 H(+). It functions in the pathway cofactor biosynthesis; thiamine diphosphate biosynthesis. Catalyzes the synthesis of the hydroxymethylpyrimidine phosphate (HMP-P) moiety of thiamine from aminoimidazole ribotide (AIR) in a radical S-adenosyl-L-methionine (SAM)-dependent reaction. The sequence is that of Phosphomethylpyrimidine synthase from Pyrobaculum aerophilum (strain ATCC 51768 / DSM 7523 / JCM 9630 / CIP 104966 / NBRC 100827 / IM2).